The sequence spans 558 residues: uncharacterized protein (558 aa).

A DhaL domain is found at 7-206 (SNFIDMLRLG…FACFLEGMLS (200 aa)).

This is an uncharacterized protein from Mycoplasma pneumoniae (strain ATCC 29342 / M129 / Subtype 1) (Mycoplasmoides pneumoniae).